Consider the following 139-residue polypeptide: Ribulose bisphosphate carboxylase small subunit (139 aa).

Belongs to the RuBisCO small chain family. Heterohexadecamer of 8 large and 8 small subunits.

The protein resides in the plastid. The protein localises to the chloroplast. Functionally, ruBisCO catalyzes two reactions: the carboxylation of D-ribulose 1,5-bisphosphate, the primary event in carbon dioxide fixation, as well as the oxidative fragmentation of the pentose substrate in the photorespiration process. Both reactions occur simultaneously and in competition at the same active site. Although the small subunit is not catalytic it is essential for maximal activity. The polypeptide is Ribulose bisphosphate carboxylase small subunit (Thalassiosira nordenskioeldii (Marine diatom)).